We begin with the raw amino-acid sequence, 485 residues long: Velvet complex subunit B (485 aa).

Residues 33 to 459 (GRKHYSLEVV…GNQGQKLPLA (427 aa)) enclose the Velvet domain. Residues 107–353 (VLHPSSVDRH…PPPPRHTYTR (247 aa)) are disordered. Composition is skewed to polar residues over residues 134–155 (APQS…TLSQ), 234–243 (RSPSSSTSDH), 267–304 (SISS…SPHS), and 326–341 (THSQ…QHVS).

This sequence belongs to the velvet family. VelB subfamily. Component of the heterotrimeric velvet complex composed of laeA, veA and velB; VeA acting as a bridging protein between laeA and velB. Forms a heterodimeric complex with vosA; the formation of the velB-vosA complex is light-dependent.

Its subcellular location is the nucleus. It is found in the cytoplasm. Functionally, component of the velvet transcription factor complex that controls sexual/asexual developmental ratio in response to light, promoting sexual development in the darkness while stimulating asexual sporulation under illumination. The velvet complex acts as a global regulator for secondary metabolite gene expression. Component of the velB-VosA heterodimeric complex that plays a dual role in activating genes associated with spore maturation and repressing certain development-associated genes. The velB-VosA complex binds DNA through the DNA-binding domain of vosA that recognizes an 11-nucleotide consensus sequence 5'-CTGGCCGCGGC-3' consisting of two motifs in the promoters of key developmental regulatory genes. This is Velvet complex subunit B from Laccaria bicolor (strain S238N-H82 / ATCC MYA-4686) (Bicoloured deceiver).